Here is a 314-residue protein sequence, read N- to C-terminus: 4-hydroxy-3-methylbut-2-enyl diphosphate reductase (314 aa).

Cys-12 is a [4Fe-4S] cluster binding site. Residues His-41 and His-74 each coordinate (2E)-4-hydroxy-3-methylbut-2-enyl diphosphate. Dimethylallyl diphosphate contacts are provided by His-41 and His-74. Isopentenyl diphosphate-binding residues include His-41 and His-74. Cys-96 lines the [4Fe-4S] cluster pocket. (2E)-4-hydroxy-3-methylbut-2-enyl diphosphate is bound at residue His-124. Residue His-124 coordinates dimethylallyl diphosphate. Position 124 (His-124) interacts with isopentenyl diphosphate. The active-site Proton donor is Glu-126. Thr-167 is a (2E)-4-hydroxy-3-methylbut-2-enyl diphosphate binding site. Residue Cys-197 participates in [4Fe-4S] cluster binding. Residues Ser-225, Ser-226, Asn-227, and Ser-269 each coordinate (2E)-4-hydroxy-3-methylbut-2-enyl diphosphate. 4 residues coordinate dimethylallyl diphosphate: Ser-225, Ser-226, Asn-227, and Ser-269. Residues Ser-225, Ser-226, Asn-227, and Ser-269 each contribute to the isopentenyl diphosphate site.

It belongs to the IspH family. Requires [4Fe-4S] cluster as cofactor.

The catalysed reaction is isopentenyl diphosphate + 2 oxidized [2Fe-2S]-[ferredoxin] + H2O = (2E)-4-hydroxy-3-methylbut-2-enyl diphosphate + 2 reduced [2Fe-2S]-[ferredoxin] + 2 H(+). It catalyses the reaction dimethylallyl diphosphate + 2 oxidized [2Fe-2S]-[ferredoxin] + H2O = (2E)-4-hydroxy-3-methylbut-2-enyl diphosphate + 2 reduced [2Fe-2S]-[ferredoxin] + 2 H(+). It participates in isoprenoid biosynthesis; dimethylallyl diphosphate biosynthesis; dimethylallyl diphosphate from (2E)-4-hydroxy-3-methylbutenyl diphosphate: step 1/1. Its pathway is isoprenoid biosynthesis; isopentenyl diphosphate biosynthesis via DXP pathway; isopentenyl diphosphate from 1-deoxy-D-xylulose 5-phosphate: step 6/6. Its function is as follows. Catalyzes the conversion of 1-hydroxy-2-methyl-2-(E)-butenyl 4-diphosphate (HMBPP) into a mixture of isopentenyl diphosphate (IPP) and dimethylallyl diphosphate (DMAPP). Acts in the terminal step of the DOXP/MEP pathway for isoprenoid precursor biosynthesis. This Aliivibrio fischeri (strain MJ11) (Vibrio fischeri) protein is 4-hydroxy-3-methylbut-2-enyl diphosphate reductase.